The chain runs to 282 residues: N-methyltransferase gliN (282 aa).

Belongs to the methyltransferase superfamily. LaeA methyltransferase family.

Its pathway is mycotoxin biosynthesis. Its function is as follows. N-methyltransferase; part of the gene cluster that mediates the biosynthesis of gliotoxin, a member of the epipolythiodioxopiperazine (ETP) class of toxins characterized by a disulfide bridged cyclic dipeptide. The first step in gliotoxin biosynthesis is the condensation of serine and phenylalanine to form the cyclo-L-phenylalanyl-L-serine diketopiperazine (DKP) by the NRPS gliP. GliP is also able to produce the DKP cyclo-L-tryptophanyl-L-serine, suggesting that the substrate specificity of the first adenylation (A) domain in gliP is sufficiently relaxed to accommodate both L-Phe and L-Trp. The cytochrome P450 monooxygenase gliC has been shown to catalyze the subsequent hydroxylation of the alpha-carbon of L-Phe in cyclo-L-phenylalanyl-L-serine whereas the second cytochrome P450 enzyme, gliF, is presumably involved in the modification of the DKP side chain. The glutathione S-transferase (GST) gliG then forms a bis-glutathionylated biosynthetic intermediate which is responsible for the sulfurization of gliotoxin. This bis-glutathionylated intermediate is subsequently processed by the gamma-glutamyl cyclotransferase gliK to remove both gamma-glutamyl moieties. Subsequent processing via gliI yields a biosynthetic intermediate, which is N-methylated via the N-methyltransferase gliN, before the gliotoxin oxidoreductase gliT-mediated disulfide bridge closure. GliN-mediated amide methylation confers stability to ETP, damping the spontaneous formation of tri- and tetrasulfides. Intracellular dithiol gliotoxin oxidized by gliT is subsequently effluxed by gliA. Gliotoxin contributes to pathogenesis during invasive aspergillosis. In macrophages and neutrophils, gliotoxin showed inhibition of various different cell functions including cytokine production, antigen presentation, phagocytosis, and production of reactive oxygen species. The chain is N-methyltransferase gliN from Aspergillus fumigatus (strain ATCC MYA-4609 / CBS 101355 / FGSC A1100 / Af293) (Neosartorya fumigata).